The chain runs to 315 residues: Calumenin (315 aa).

A signal peptide spans 1–19 (MDTRRLLLCLCLWVACVVS). 6 EF-hand domains span residues 68–103 (ESKERLGMIVSKIDLDNDGYVTEGELTAWIKKAQKK), 104–139 (YVYDNVERQWQEFDLNQDGLVSWDEYRNVTYGTYLD), 151–186 (QMMVRDERRFKMADQDGDLIATKEEFTAFLHPEEFD), 188–223 (MKDIVVLETMEDIDKNGDGLIDLEEYIGDMYNHDGD), 229–264 (WVKTEREQFVEFRDKNHDGKMDKEETKDWILPSDYD), and 265–300 (HAEAESRHLVYESDQNKDSKLTREEIVDKYDLFVGS). Ca(2+) is bound by residues aspartate 81, aspartate 83, aspartate 85, tyrosine 87, glutamate 92, aspartate 117, asparagine 119, aspartate 121, and glutamate 128. Asparagine 131 carries an N-linked (GlcNAc...) asparagine glycan. Ca(2+) contacts are provided by aspartate 164, aspartate 166, aspartate 168, glutamate 175, aspartate 201, asparagine 203, aspartate 205, glutamate 212, aspartate 242, asparagine 244, aspartate 246, lysine 248, glutamate 253, aspartate 278, asparagine 280, aspartate 282, lysine 284, and glutamate 289. The short motif at 312-315 (HDEF) is the Prevents secretion from ER element.

Belongs to the CREC family. Interacts with ggcx.

It is found in the endoplasmic reticulum membrane. It localises to the golgi apparatus. Its subcellular location is the secreted. The protein resides in the melanosome. The protein localises to the sarcoplasmic reticulum lumen. Its function is as follows. Involved in regulation of vitamin K-dependent carboxylation of multiple N-terminal glutamate residues. Seems to inhibit gamma-carboxylase ggcx. Binds 7 calcium ions with a low affinity. The polypeptide is Calumenin (calu) (Xenopus tropicalis (Western clawed frog)).